Reading from the N-terminus, the 199-residue chain is Nucleoside triphosphate pyrophosphatase (199 aa).

The active-site Proton acceptor is the D76.

Belongs to the Maf family. It depends on a divalent metal cation as a cofactor.

Its subcellular location is the cytoplasm. The catalysed reaction is a ribonucleoside 5'-triphosphate + H2O = a ribonucleoside 5'-phosphate + diphosphate + H(+). It catalyses the reaction a 2'-deoxyribonucleoside 5'-triphosphate + H2O = a 2'-deoxyribonucleoside 5'-phosphate + diphosphate + H(+). In terms of biological role, nucleoside triphosphate pyrophosphatase. May have a dual role in cell division arrest and in preventing the incorporation of modified nucleotides into cellular nucleic acids. In Ruegeria sp. (strain TM1040) (Silicibacter sp.), this protein is Nucleoside triphosphate pyrophosphatase.